The following is a 68-amino-acid chain: ATP synthase F(0) complex subunit 8 (68 aa).

The helical transmembrane segment at 8–24 (VWPTIITSMLLTLFLLM) threads the bilayer. An N6-acetyllysine; alternate modification is found at Lys54. Position 54 is an N6-succinyllysine; alternate (Lys54). Lys57 is subject to N6-acetyllysine.

This sequence belongs to the ATPase protein 8 family. As to quaternary structure, component of the ATP synthase complex composed at least of ATP5F1A/subunit alpha, ATP5F1B/subunit beta, ATP5MC1/subunit c (homooctomer), MT-ATP6/subunit a, MT-ATP8/subunit 8, ATP5ME/subunit e, ATP5MF/subunit f, ATP5MG/subunit g, ATP5MK/subunit k, ATP5MJ/subunit j, ATP5F1C/subunit gamma, ATP5F1D/subunit delta, ATP5F1E/subunit epsilon, ATP5PF/subunit F6, ATP5PB/subunit b, ATP5PD/subunit d, ATP5PO/subunit OSCP. ATP synthase complex consists of a soluble F(1) head domain (subunits alpha(3) and beta(3)) - the catalytic core - and a membrane F(0) domain - the membrane proton channel (subunits c, a, 8, e, f, g, k and j). These two domains are linked by a central stalk (subunits gamma, delta, and epsilon) rotating inside the F1 region and a stationary peripheral stalk (subunits F6, b, d, and OSCP). Interacts with PRICKLE3.

It localises to the mitochondrion membrane. In terms of biological role, subunit 8, of the mitochondrial membrane ATP synthase complex (F(1)F(0) ATP synthase or Complex V) that produces ATP from ADP in the presence of a proton gradient across the membrane which is generated by electron transport complexes of the respiratory chain. ATP synthase complex consist of a soluble F(1) head domain - the catalytic core - and a membrane F(1) domain - the membrane proton channel. These two domains are linked by a central stalk rotating inside the F(1) region and a stationary peripheral stalk. During catalysis, ATP synthesis in the catalytic domain of F(1) is coupled via a rotary mechanism of the central stalk subunits to proton translocation. In vivo, can only synthesize ATP although its ATP hydrolase activity can be activated artificially in vitro. Part of the complex F(0) domain. In Symphalangus syndactylus (Siamang), this protein is ATP synthase F(0) complex subunit 8.